The sequence spans 161 residues: Protein ilm1 (161 aa).

At 1–6 the chain is on the cytoplasmic side; sequence MLFSFR. Residues 7 to 27 traverse the membrane as a helical segment; that stretch reads AIVLFYCCMLTFAGIGFLWNP. Topologically, residues 28–56 are lumenal; the sequence is KFVVESGLVALIGASMEVKPLIVTQDNLS. The chain crosses the membrane as a helical span at residues 57-77; it reads TLALSGLVFLILGMIYTISLL. At 78 to 81 the chain is on the cytoplasmic side; that stretch reads QSNF. The helical transmembrane segment at 82–102 threads the bilayer; the sequence is LFFSGITPIRAIFDFILTGFI. Residues 103 to 112 lie on the Lumenal side of the membrane; that stretch reads YLKKEHIASN. A helical membrane pass occupies residues 113-133; it reads SLTFTFAFCDLMWQFWMFAAM. The Cytoplasmic segment spans residues 134–161; that stretch reads SEERAKYLKNQKKAEELAARKAREVEES.

Belongs to the ILM1 family.

It is found in the endoplasmic reticulum. It localises to the membrane. The polypeptide is Protein ilm1 (Schizosaccharomyces pombe (strain 972 / ATCC 24843) (Fission yeast)).